The sequence spans 89 residues: Small ribosomal subunit protein uS15 (89 aa).

It belongs to the universal ribosomal protein uS15 family. In terms of assembly, part of the 30S ribosomal subunit. Forms a bridge to the 50S subunit in the 70S ribosome, contacting the 23S rRNA.

In terms of biological role, one of the primary rRNA binding proteins, it binds directly to 16S rRNA where it helps nucleate assembly of the platform of the 30S subunit by binding and bridging several RNA helices of the 16S rRNA. Forms an intersubunit bridge (bridge B4) with the 23S rRNA of the 50S subunit in the ribosome. The chain is Small ribosomal subunit protein uS15 from Parabacteroides distasonis (strain ATCC 8503 / DSM 20701 / CIP 104284 / JCM 5825 / NCTC 11152).